The primary structure comprises 474 residues: Phenolic acid decarboxylase (474 aa).

Positions 161, 182, and 224 each coordinate Mn(2+). Prenylated FMN contacts are provided by residues 161 to 166 (NVGTYR) and 181 to 182 (MH). Catalysis depends on E273, which acts as the Proton donor.

This sequence belongs to the UbiD family. YclC subfamily. It depends on prenylated FMN as a cofactor. Requires Mn(2+) as cofactor.

The catalysed reaction is vanillate + H(+) = guaiacol + CO2. In terms of biological role, involved in the non-oxidative decarboxylation and detoxification of phenolic derivatives under both aerobic and anaerobic conditions. Phenolic acid decarboxylase that catalyzes the reversible decarboxylation of vanillate. The chain is Phenolic acid decarboxylase from Streptomyces sp. (strain D7).